A 38-amino-acid chain; its full sequence is uncharacterized protein (38 aa).

It belongs to the asfivirus C84L family.

This is an uncharacterized protein from Ornithodoros (relapsing fever ticks).